Consider the following 363-residue polypeptide: UDP-N-acetylglucosamine--N-acetylmuramyl-(pentapeptide) pyrophosphoryl-undecaprenol N-acetylglucosamine transferase (363 aa).

Residues 12 to 14 (TGG), asparagine 122, arginine 164, serine 191, isoleucine 245, and glutamine 290 each bind UDP-N-acetyl-alpha-D-glucosamine.

It belongs to the glycosyltransferase 28 family. MurG subfamily.

It localises to the cell membrane. It catalyses the reaction di-trans,octa-cis-undecaprenyl diphospho-N-acetyl-alpha-D-muramoyl-L-alanyl-D-glutamyl-meso-2,6-diaminopimeloyl-D-alanyl-D-alanine + UDP-N-acetyl-alpha-D-glucosamine = di-trans,octa-cis-undecaprenyl diphospho-[N-acetyl-alpha-D-glucosaminyl-(1-&gt;4)]-N-acetyl-alpha-D-muramoyl-L-alanyl-D-glutamyl-meso-2,6-diaminopimeloyl-D-alanyl-D-alanine + UDP + H(+). It participates in cell wall biogenesis; peptidoglycan biosynthesis. Its function is as follows. Cell wall formation. Catalyzes the transfer of a GlcNAc subunit on undecaprenyl-pyrophosphoryl-MurNAc-pentapeptide (lipid intermediate I) to form undecaprenyl-pyrophosphoryl-MurNAc-(pentapeptide)GlcNAc (lipid intermediate II). The chain is UDP-N-acetylglucosamine--N-acetylmuramyl-(pentapeptide) pyrophosphoryl-undecaprenol N-acetylglucosamine transferase from Lawsonia intracellularis (strain PHE/MN1-00).